Reading from the N-terminus, the 535-residue chain is Probable galacturonosyltransferase 12 (535 aa).

At 1 to 37 (MQLHISPSLRHVTVVTGKGLREFIKVKVGSRRFSYQM) the chain is on the cytoplasmic side. A helical; Signal-anchor for type II membrane protein transmembrane segment spans residues 38-58 (VFYSLLFFTFLLRFVFVLSTV). Topologically, residues 59–535 (DTIDGDPSPC…FIKSCHIRAS (477 aa)) are lumenal. N-linked (GlcNAc...) asparagine glycosylation is found at asparagine 397 and asparagine 430.

It belongs to the glycosyltransferase 8 family. In terms of tissue distribution, highly expressed in stems. Detected in roots, inflorescences, siliques, and leaves. Expressed in cells undergoing secondary wall thickening, including interfascicular fibers and primary and secondary xylem.

Its subcellular location is the golgi apparatus membrane. The protein operates within glycan metabolism; pectin biosynthesis. In terms of biological role, involved in pectin assembly and/or distribution, and in the synthesis of secondary wall glucuronoxylan. Probably involved in the synthesis of the glycosyl sequence at the glucuronoxylan reducing end. May be involved in synthesis of a complex glycan primer for xylan synthesis. The chain is Probable galacturonosyltransferase 12 (GAUT12) from Arabidopsis thaliana (Mouse-ear cress).